Reading from the N-terminus, the 158-residue chain is UPF0758 protein YkfG (158 aa).

The MPN domain maps to 36 to 158; it reads AFTSTHAVRE…IYSFAEHGLL (123 aa). 3 residues coordinate Zn(2+): His-107, His-109, and Asp-120. A JAMM motif motif is present at residues 107–120; the sequence is HNHPSGETTPSQAD.

This sequence belongs to the UPF0758 family.

This is UPF0758 protein YkfG (ykfG) from Escherichia coli (strain K12).